We begin with the raw amino-acid sequence, 312 residues long: Porphobilinogen deaminase (312 aa).

Cysteine 241 bears the S-(dipyrrolylmethanemethyl)cysteine mark.

It belongs to the HMBS family. In terms of assembly, monomer. Requires dipyrromethane as cofactor.

The catalysed reaction is 4 porphobilinogen + H2O = hydroxymethylbilane + 4 NH4(+). It functions in the pathway porphyrin-containing compound metabolism; protoporphyrin-IX biosynthesis; coproporphyrinogen-III from 5-aminolevulinate: step 2/4. Functionally, tetrapolymerization of the monopyrrole PBG into the hydroxymethylbilane pre-uroporphyrinogen in several discrete steps. This Pelotomaculum thermopropionicum (strain DSM 13744 / JCM 10971 / SI) protein is Porphobilinogen deaminase.